We begin with the raw amino-acid sequence, 379 residues long: MPAVTYEHIKTCKQSGARLGIVHTPHGSFETPMFMPVGTKATVKTMSPEELRQIEAKIILGNTYHLWLQPGNDIIKHAGGLHKFMNWDGPILTDSGGFQVFSLSNLRKITEEGVEFRHHTNGSKLFLSPEKSMQIQNDLGSDIMMAFDECPPMPAEYDYVKKSIERTTRWAKRCLDAHQRPEDQALFGIIQGGEHEDLREQSAKDLVELDFPGYAIGGLSVGEPKPVMYKMVEHTEQFMPKDKPRYLMGVGSPDALIECSIRGMDMFDCVLPTRIARNGTCMTSQGRLVIKNAKFADDLRPLDENCDCYTCQNYSRAYIRHLIKAEETFGIRLTTIHNLHFLLKLMEDIRQAIREDRLLDFKEEFFEQYGLNVENPKNF.

Aspartate 94 (proton acceptor) is an active-site residue. Residues 94-98 (DSGGF), aspartate 148, glutamine 191, and glycine 218 each bind substrate. Positions 249–255 (GVGSPDA) are RNA binding. The active-site Nucleophile is the aspartate 268. Residues 273–277 (TRIAR) are RNA binding; important for wobble base 34 recognition. 4 residues coordinate Zn(2+): cysteine 306, cysteine 308, cysteine 311, and histidine 337.

The protein belongs to the queuine tRNA-ribosyltransferase family. In terms of assembly, homodimer. Within each dimer, one monomer is responsible for RNA recognition and catalysis, while the other monomer binds to the replacement base PreQ1. The cofactor is Zn(2+).

It catalyses the reaction 7-aminomethyl-7-carbaguanine + guanosine(34) in tRNA = 7-aminomethyl-7-carbaguanosine(34) in tRNA + guanine. Its pathway is tRNA modification; tRNA-queuosine biosynthesis. Its function is as follows. Catalyzes the base-exchange of a guanine (G) residue with the queuine precursor 7-aminomethyl-7-deazaguanine (PreQ1) at position 34 (anticodon wobble position) in tRNAs with GU(N) anticodons (tRNA-Asp, -Asn, -His and -Tyr). Catalysis occurs through a double-displacement mechanism. The nucleophile active site attacks the C1' of nucleotide 34 to detach the guanine base from the RNA, forming a covalent enzyme-RNA intermediate. The proton acceptor active site deprotonates the incoming PreQ1, allowing a nucleophilic attack on the C1' of the ribose to form the product. After dissociation, two additional enzymatic reactions on the tRNA convert PreQ1 to queuine (Q), resulting in the hypermodified nucleoside queuosine (7-(((4,5-cis-dihydroxy-2-cyclopenten-1-yl)amino)methyl)-7-deazaguanosine). The chain is Queuine tRNA-ribosyltransferase from Staphylococcus aureus (strain bovine RF122 / ET3-1).